Here is a 318-residue protein sequence, read N- to C-terminus: Mitochondrial thiamine pyrophosphate carrier (318 aa).

Solcar repeat units lie at residues N13–L106, H116–A202, and T214–L309. 5 consecutive transmembrane segments (helical) span residues A19–I39, I87–L107, F122–L142, V173–F193, and L220–I240. The short motif at K241–V246 is the Substrate recognition element. Residues A293–I313 form a helical membrane-spanning segment.

The protein belongs to the mitochondrial carrier (TC 2.A.29) family.

It localises to the mitochondrion membrane. It catalyses the reaction thiamine phosphate(out) + thiamine diphosphate(in) = thiamine phosphate(in) + thiamine diphosphate(out). Its function is as follows. Mitochondrial transporter mediating uptake of thiamine diphosphate into mitochondria. It is not clear if the antiporter activity is affected by the membrane potential or by the proton electrochemical gradient. The sequence is that of Mitochondrial thiamine pyrophosphate carrier (Slc25a19) from Mus musculus (Mouse).